The sequence spans 345 residues: Fructose-1,6-bisphosphatase class 1 (345 aa).

Residues glutamate 90, aspartate 109, leucine 111, and aspartate 112 each coordinate Mg(2+). Substrate contacts are provided by residues aspartate 112–serine 115 and asparagine 200. Residue glutamate 272 coordinates Mg(2+).

This sequence belongs to the FBPase class 1 family. Homotetramer. The cofactor is Mg(2+).

It is found in the cytoplasm. It carries out the reaction beta-D-fructose 1,6-bisphosphate + H2O = beta-D-fructose 6-phosphate + phosphate. It participates in carbohydrate biosynthesis; gluconeogenesis. The polypeptide is Fructose-1,6-bisphosphatase class 1 (Bradyrhizobium diazoefficiens (strain JCM 10833 / BCRC 13528 / IAM 13628 / NBRC 14792 / USDA 110)).